Here is a 208-residue protein sequence, read N- to C-terminus: MAIFEVKHPLIQHKLGLMRKADQSTKQFRELASEVARLLTYEATKDLETESITITGWAGPVTVQQIKGKKITVVPILRAGLGMMNGVLDMIPSAKVSVVGLYRNEETLEPVAYYEKFASGMEERIALIIDPMLATGGSLLTTIEMLKKTGCRRIKGLFLVAVPEGLERIGRAHPDVEIYVASIDERLNEQGYILPGLGDAGDKIFGTK.

5-phospho-alpha-D-ribose 1-diphosphate contacts are provided by residues R78, R103, and 130 to 138 (DPMLATGGS). Uracil-binding positions include I193 and 198–200 (GDA). D199 is a binding site for 5-phospho-alpha-D-ribose 1-diphosphate.

It belongs to the UPRTase family. Requires Mg(2+) as cofactor.

It catalyses the reaction UMP + diphosphate = 5-phospho-alpha-D-ribose 1-diphosphate + uracil. The protein operates within pyrimidine metabolism; UMP biosynthesis via salvage pathway; UMP from uracil: step 1/1. Its activity is regulated as follows. Allosterically activated by GTP. Functionally, catalyzes the conversion of uracil and 5-phospho-alpha-D-ribose 1-diphosphate (PRPP) to UMP and diphosphate. The sequence is that of Uracil phosphoribosyltransferase from Pelobacter propionicus (strain DSM 2379 / NBRC 103807 / OttBd1).